Consider the following 293-residue polypeptide: Nucleotide-binding protein BBR47_52620 (293 aa).

17–24 (GMSGAGKT) contributes to the ATP binding site. 68-71 (DLRG) provides a ligand contact to GTP.

The protein belongs to the RapZ-like family.

Functionally, displays ATPase and GTPase activities. The polypeptide is Nucleotide-binding protein BBR47_52620 (Brevibacillus brevis (strain 47 / JCM 6285 / NBRC 100599)).